Consider the following 70-residue polypeptide: DNA gyrase inhibitor YacG (70 aa).

Zn(2+) contacts are provided by Cys20, Cys23, Cys35, and Cys39.

The protein belongs to the DNA gyrase inhibitor YacG family. As to quaternary structure, interacts with GyrB. It depends on Zn(2+) as a cofactor.

In terms of biological role, inhibits all the catalytic activities of DNA gyrase by preventing its interaction with DNA. Acts by binding directly to the C-terminal domain of GyrB, which probably disrupts DNA binding by the gyrase. The sequence is that of DNA gyrase inhibitor YacG from Rhizobium leguminosarum bv. trifolii (strain WSM2304).